A 394-amino-acid chain; its full sequence is 1-deoxy-D-xylulose 5-phosphate reductoisomerase (394 aa).

NADPH contacts are provided by Thr12, Gly13, Ser14, Ile15, Lys39, Gln40, and Asn126. A 1-deoxy-D-xylulose 5-phosphate-binding site is contributed by Lys127. Residue Glu128 participates in NADPH binding. Residue Asp152 coordinates Mn(2+). 4 residues coordinate 1-deoxy-D-xylulose 5-phosphate: Ser153, Glu154, Ser183, and His206. Residue Glu154 coordinates Mn(2+). Gly212 is an NADPH binding site. Positions 219, 224, 225, and 228 each coordinate 1-deoxy-D-xylulose 5-phosphate. Glu228 is a binding site for Mn(2+).

This sequence belongs to the DXR family. It depends on Mg(2+) as a cofactor. The cofactor is Mn(2+).

It carries out the reaction 2-C-methyl-D-erythritol 4-phosphate + NADP(+) = 1-deoxy-D-xylulose 5-phosphate + NADPH + H(+). It functions in the pathway isoprenoid biosynthesis; isopentenyl diphosphate biosynthesis via DXP pathway; isopentenyl diphosphate from 1-deoxy-D-xylulose 5-phosphate: step 1/6. In terms of biological role, catalyzes the NADPH-dependent rearrangement and reduction of 1-deoxy-D-xylulose-5-phosphate (DXP) to 2-C-methyl-D-erythritol 4-phosphate (MEP). This chain is 1-deoxy-D-xylulose 5-phosphate reductoisomerase, found in Neisseria meningitidis serogroup B (strain ATCC BAA-335 / MC58).